Consider the following 295-residue polypeptide: Probable porphobilinogen deaminase (295 aa).

Residue Cys234 is modified to S-(dipyrrolylmethanemethyl)cysteine.

It belongs to the HMBS family. It depends on dipyrromethane as a cofactor.

The catalysed reaction is 4 porphobilinogen + H2O = hydroxymethylbilane + 4 NH4(+). It participates in porphyrin-containing compound metabolism; protoporphyrin-IX biosynthesis; coproporphyrinogen-III from 5-aminolevulinate: step 2/4. In terms of biological role, tetrapolymerization of the monopyrrole PBG into the hydroxymethylbilane pre-uroporphyrinogen in several discrete steps. This chain is Probable porphobilinogen deaminase (hemC), found in Thermoplasma acidophilum (strain ATCC 25905 / DSM 1728 / JCM 9062 / NBRC 15155 / AMRC-C165).